We begin with the raw amino-acid sequence, 272 residues long: Acidic leucine-rich nuclear phosphoprotein 32-related protein 2 (272 aa).

LRR repeat units follow at residues 57 to 78 (SLEELSVAGARLSSLAGLPRLP), 79 to 100 (ALRRLSLPDNRLSGAASLAAVA), and 106 to 127 (TLRHLDLGNNRFADVAELAPLA). In terms of domain architecture, LRRCT spans 139 to 184 (CPVTKAKGYRDKVFALIPSLKFLDGMDAEGNDCLDSDDEEDEEEDE). The tract at residues 163–272 (GMDAEGNDCL…DSEDDANGDN (110 aa)) is disordered. Over residues 164 to 241 (MDAEGNDCLD…DEAGADEEDE (78 aa)) the composition is skewed to acidic residues. Positions 248 to 257 (SKGSSGSAQP) are enriched in polar residues.

This sequence belongs to the ANP32 family.

The chain is Acidic leucine-rich nuclear phosphoprotein 32-related protein 2 from Oryza sativa subsp. japonica (Rice).